Consider the following 229-residue polypeptide: Ras-related protein Rab-33B (229 aa).

Residues Asn-43, Val-44, Gly-45, Lys-46, Thr-47, Cys-48, Thr-62, and Thr-65 each coordinate GTP. Mg(2+) is bound at residue Thr-47. The Switch 1 signature appears at 56-68; that stretch reads GRFPDRTEATIGV. Mg(2+) is bound by residues Thr-65 and Asp-88. Positions 89–108 match the Switch 2 motif; the sequence is TAGQERFRKSMVQHYYRNVH. GTP is bound by residues Gly-91, Asn-148, Lys-149, Asp-151, Ala-179, and Lys-180. S-geranylgeranyl cysteine attachment occurs at residues Cys-227 and Cys-229. Cys-229 bears the Cysteine methyl ester mark.

This sequence belongs to the small GTPase superfamily. Rab family. As to quaternary structure, interacts (GTP- and GDP-bound forms) with ATG16L1; the complex consists of a tetramer where two RAB33B molecules bind independently one molecule of the ATG16L1 homodimer; the interaction promotes ATG12-ATG5-ATG16L1 complex recruitment to phagophores. Interacts with ATG16L2; however interaction is approximately hundred times lower than for ATG16L1. Interacts with RIC1 (via C-terminus domain); the interaction is direct with a preference for RAB33B-GTP. Interacts with RGP1. Mg(2+) is required as a cofactor. In terms of processing, prenylated.

Its subcellular location is the golgi apparatus membrane. It is found in the golgi apparatus. It localises to the cis-Golgi network. The protein localises to the preautophagosomal structure membrane. It catalyses the reaction GTP + H2O = GDP + phosphate + H(+). With respect to regulation, regulated by guanine nucleotide exchange factors (GEFs) which promote the exchange of bound GDP for free GTP. Regulated by GTPase activating proteins (GAPs) such as SGSM2 which increase the GTP hydrolysis activity. Inhibited by GDP dissociation inhibitors (GDIs). Functionally, the small GTPases Rab are key regulators of intracellular membrane trafficking, from the formation of transport vesicles to their fusion with membranes. Rabs cycle between an inactive GDP-bound form and an active GTP-bound form that is able to recruit to membranes different sets of downstream effectors directly responsible for vesicle formation, movement, tethering and fusion. RAB33B acts, in coordination with RAB6A, to regulate intra-Golgi retrograde trafficking. Participates in autophagosome formation by recruiting the ATG12-ATG5-ATG16L1 complex to phagophores, probably in a nucleotide-independent manner. The polypeptide is Ras-related protein Rab-33B (RAB33B) (Pongo abelii (Sumatran orangutan)).